Consider the following 455-residue polypeptide: Angiopoietin-related protein 3 (455 aa).

A signal peptide spans 1–16 (MHTIKLFLFVVPLVIA). The tract at residues 17–165 (SRVDPDLSSF…QEHPEVTSLK (149 aa)) is sufficient to inhibit LPL lipase activity. A sufficient to inhibit LIPG/EL phospholipase activity region spans residues 17–207 (SRVDPDLSSF…EIEKQLRKTG (191 aa)). The interval 32 to 56 (EPKSRFAMLDDVKILANGLLQLGHG) is required for inhibition of LPL lipase activity. Positions 85–206 (LSLRTNEIKE…KEIEKQLRKT (122 aa)) form a coiled coil. A glycan (N-linked (GlcNAc...) asparagine) is linked at Asn-115. The disordered stretch occupies residues 202-242 (QLRKTGIQEPSENSLSSKSRAPRTTPPLQLNETENTEQDDL). Over residues 209-220 (QEPSENSLSSKS) the composition is skewed to polar residues. The O-linked (GlcNAc) threonine glycan is linked to Thr-226. Asn-232 carries N-linked (GlcNAc...) asparagine glycosylation. A Fibrinogen C-terminal domain is found at 237 to 455 (TEQDDLPADC…SSKMMLQPTT (219 aa)). The cysteines at positions 246 and 274 are disulfide-linked. N-linked (GlcNAc...) asparagine glycans are attached at residues Asn-296 and Asn-357. A disulfide bridge connects residues Cys-394 and Cys-408.

In terms of assembly, interacts with ANGPTL8. Interacts with ITGB3. Post-translationally, in part proteolytically cleaved by proprotein convertases; proposed to be involved in activation. In primary hepatocytes is intracellularily predominantly processed by FURIN and extracellularily by FURIN and PCSK6/PACE4. In 18.5 dpc embryos 75% of protein is found to be processed compared to 25 % in adults. As to expression, predominantly expressed in liver, weakly expressed in kidney and lung. Expressed in podocytes (at protein level). Expressed in hypothalamic neurons (at protein level). Expressed in bone marrow sinusoidal endothelial cells (at protein level).

The protein localises to the secreted. It is found in the cell projection. Its subcellular location is the lamellipodium. Functionally, acts in part as a hepatokine that is involved in regulation of lipid and glucose metabolism. Proposed to play a role in the trafficking of energy substrates to either storage or oxidative tissues in response to food intake. Has a stimulatory effect on plasma triglycerides (TG), which is achieved by suppressing plasma TG clearance via inhibition of LPL activity; the function seems to be specific for the feeding conditions. The inhibition of LPL activity appears to be an indirect mechanism involving recruitment of proprotein convertases PCSK6 and FURIN to LPL leading to cleavage and dissociation of LPL from the cell surface; the function does not require ANGPTL3 proteolytic cleavage but seems to be mediated by the N-terminal domain, and is not inhibited by GPIHBP1. Can inhibit endothelial lipase, causing increased plasma levels of high density lipoprotein (HDL) cholesterol and phospholipids; the cleaved N-terminal domain is more efficient than the uncleaved proprotein. Can bind to adipocytes to activate lipolysis, releasing free fatty acids and glycerol. Suppresses LPL specifically in oxidative tissues which is required to route very low density lipoprotein (VLDL)-TG to white adipose tissue (WAT) for storage in response to food; the function may involve cooperation with circulating, liver-derived ANGPTL8 and ANGPTL4 expression in WAT. Contributes to lower plasma levels of low density lipoprotein (LDL)-cholesterol by a mechanism that is independent of the canonical pathway implicating APOE and LDLR. May stimulate hypothalamic LPL activity. Involved in angiogenesis. Binds to endothelial cells via integrin alpha-V/beta-3 (ITGAV:ITGB3), activates FAK, MAPK and Akt signaling pathways and induces cell adhesion and cell migration. May increase the motility of podocytes. Secreted from podocytes, may modulate properties of glomerular endothelial cells involving integrin alpha-V/beta-3 and Akt signaling. May induce actin filament rearrangements in podocytes implicating integrin alpha-V/beta-3 and Rac1 activation. Binds to hematopoietic stem cells (HSC) and is involved in the regulation of HSC activity probably implicating down-regulation of IKZF1/IKAROS. The sequence is that of Angiopoietin-related protein 3 (Angptl3) from Mus musculus (Mouse).